The chain runs to 98 residues: UPF0251 protein Sbal_3699 (98 aa).

The protein belongs to the UPF0251 family.

This Shewanella baltica (strain OS155 / ATCC BAA-1091) protein is UPF0251 protein Sbal_3699.